A 226-amino-acid polypeptide reads, in one-letter code: UPF0502 protein Gbem_0194 (226 aa).

Belongs to the UPF0502 family.

The chain is UPF0502 protein Gbem_0194 from Citrifermentans bemidjiense (strain ATCC BAA-1014 / DSM 16622 / JCM 12645 / Bem) (Geobacter bemidjiensis).